A 574-amino-acid polypeptide reads, in one-letter code: Proline--tRNA ligase (574 aa).

This sequence belongs to the class-II aminoacyl-tRNA synthetase family. ProS type 1 subfamily. Homodimer.

It is found in the cytoplasm. It catalyses the reaction tRNA(Pro) + L-proline + ATP = L-prolyl-tRNA(Pro) + AMP + diphosphate. Catalyzes the attachment of proline to tRNA(Pro) in a two-step reaction: proline is first activated by ATP to form Pro-AMP and then transferred to the acceptor end of tRNA(Pro). As ProRS can inadvertently accommodate and process non-cognate amino acids such as alanine and cysteine, to avoid such errors it has two additional distinct editing activities against alanine. One activity is designated as 'pretransfer' editing and involves the tRNA(Pro)-independent hydrolysis of activated Ala-AMP. The other activity is designated 'posttransfer' editing and involves deacylation of mischarged Ala-tRNA(Pro). The misacylated Cys-tRNA(Pro) is not edited by ProRS. This is Proline--tRNA ligase from Anaeromyxobacter sp. (strain K).